Consider the following 89-residue polypeptide: Small ribosomal subunit protein uS15 (89 aa).

Belongs to the universal ribosomal protein uS15 family. In terms of assembly, part of the 30S ribosomal subunit. Forms a bridge to the 50S subunit in the 70S ribosome, contacting the 23S rRNA.

In terms of biological role, one of the primary rRNA binding proteins, it binds directly to 16S rRNA where it helps nucleate assembly of the platform of the 30S subunit by binding and bridging several RNA helices of the 16S rRNA. Functionally, forms an intersubunit bridge (bridge B4) with the 23S rRNA of the 50S subunit in the ribosome. This chain is Small ribosomal subunit protein uS15, found in Brucella abortus (strain S19).